Consider the following 710-residue polypeptide: Denticleless protein homolog A (710 aa).

3 WD repeats span residues Gly-47–Leu-89, Ala-96–Glu-135, and Gly-138–Phe-178. The short motif at Trp-168–Arg-171 is the DDB1-binding motif element. Residues Pro-197–Lys-204 carry the Nuclear localization signal motif. 4 WD repeats span residues Asp-215–Arg-254, Thr-270–Val-309, Gly-314–Val-355, and Gly-359–Ser-398. A DDB1-binding motif motif is present at residues Trp-244–Arg-247. Disordered stretches follow at residues Gly-428–Ala-534 and Ala-652–Met-698. Residues Pro-430–Ser-450 are compositionally biased toward low complexity. Polar residues-rich tracts occupy residues Thr-504 to Pro-516 and Ser-659 to Ser-690.

The protein belongs to the WD repeat cdt2 family. As to quaternary structure, component of the DCX(DTL) E3 ubiquitin ligase complex, at least composed of cul4 (cul4a or cul4b), ddb1, dtl/cdt2 and rbx1.

It localises to the nucleus. Its subcellular location is the cytoplasm. It is found in the cytoskeleton. The protein resides in the microtubule organizing center. The protein localises to the centrosome. It localises to the chromosome. It functions in the pathway protein modification; protein ubiquitination. Substrate-specific adapter of a DCX (DDB1-CUL4-X-box) E3 ubiquitin-protein ligase complex required for cell cycle control, DNA damage response and translesion DNA synthesis. The DCX(DTL) complex, also named CRL4(CDT2) complex, mediates the polyubiquitination and subsequent degradation of CDT1, CDKN1A/p21(CIP1), KMT5A and SDE2. CDT1 degradation in response to DNA damage is necessary to ensure proper cell cycle regulation of DNA replication. CDKN1A/p21(CIP1) degradation during S phase or following UV irradiation is essential to control replication licensing. KMT5A degradation is also important for a proper regulation of mechanisms such as TGF-beta signaling, cell cycle progression, DNA repair and cell migration. Most substrates require their interaction with PCNA for their polyubiquitination: substrates interact with PCNA via their PIP-box, and those containing the 'K+4' motif in the PIP box, recruit the DCX(DTL) complex, leading to their degradation. In undamaged proliferating cells, the DCX(DTL) complex also promotes the 'Lys-164' monoubiquitination of PCNA, thereby being involved in PCNA-dependent translesion DNA synthesis. May play a role in the regulation of the circadian clock. The polypeptide is Denticleless protein homolog A (dtl-a) (Xenopus laevis (African clawed frog)).